The chain runs to 1227 residues: Splicing factor 3B subunit 3 (1227 aa).

Belongs to the RSE1 family. In terms of assembly, identified in the spliceosome A complex; remains associated with the spliceosome throughout the splicing process. Component of the spliceosome B complex. Identified in the spliceosome C complex. Identified in the spliceosome E complex. Component of the U11/U12 snRNPs that are part of the U12-type spliceosome. Component of splicing factor SF3B complex. Identified in the SAGA transcription regulatory histone acetylation (HAT) complex; the interaction is RNA-independent.

The protein localises to the nucleus. Functionally, involved in pre-mRNA splicing as a component of the splicing factor SF3B complex, a constituent of the spliceosome. SF3B complex is required for 'A' complex assembly formed by the stable binding of U2 snRNP to the branchpoint sequence (BPS) in pre-mRNA. Sequence independent binding of SF3A/SF3B complex upstream of the branch site is essential, it may anchor U2 snRNP to the pre-mRNA. May also be involved in the assembly of the 'E' complex. Also belongs to the minor U12-dependent spliceosome, which is involved in the splicing of rare class of nuclear pre-mRNA intron. The sequence is that of Splicing factor 3B subunit 3 from Drosophila melanogaster (Fruit fly).